We begin with the raw amino-acid sequence, 381 residues long: MSDSKEPSVQQLGLLEEEQLRGLGFRQTRGYKSLAGCLGHGXLVLQLLSFTXLAGLLIQVSKFPSSISQEQSKQDAIYQNLTQLKAAVGELSEKSKLQEIYQELTRLKAAVGELPEKSQQQEIYQELTRLKAAVGELPEKSTQQEIYQELTRLKATIGELPEQSKLQEIHQELTQLKAAVGELPEKSKQQEIYQELTQLKAAVGELPEKSKQQEIYXELTRLKAAVERLCRPCPWEWTFFQGNCYFMSNSQRDWQDSVTACQEVGAQLVVIKSAEEQNFLQLQSSRSNRFAWMGLSDVNQEGTWQWVDGSPLSPSFKHYWNRGEPNNIGEEDCAEFSGNGWNDDKCNHAKFWICKMSAASCSRDEEQFLSPAPATPNPPPA.

Topologically, residues 1–37 are cytoplasmic; sequence MSDSKEPSVQQLGLLEEEQLRGLGFRQTRGYKSLAGC. 3 short sequence motifs (endocytosis signal) span residues 14–15, 16–18, and 31–34; these read LL, EEE, and YKSL. The chain crosses the membrane as a helical; Signal-anchor for type II membrane protein span at residues 38–58; it reads LGHGXLVLQLLSFTXLAGLLI. Topologically, residues 59-381 are extracellular; the sequence is QVSKFPSSIS…APATPNPPPA (323 aa). Asn-80 carries an N-linked (GlcNAc...) asparagine glycan. 6 tandem repeats follow at residues 96-118, 119-141, 142-164, 165-187, 188-210, and 211-234. The segment at 96–303 is 6 X approximate tandem repeats; the sequence is KLQEIYQELT…GLSDVNQEGT (208 aa). Cystine bridges form between Cys-233/Cys-244, Cys-261/Cys-354, and Cys-333/Cys-346. The 116-residue stretch at 240–355 folds into the C-type lectin domain; it reads FQGNCYFMSN…CNHAKFWICK (116 aa). Ca(2+)-binding residues include Glu-324, Asn-326, Ile-328, Glu-331, Asn-342, and Asp-343.

In terms of assembly, homotetramer. Interacts with C1QBP; the interaction is indicative for a C1q:C1QBP:CD209 signaling complex. Interacts with ICAM2 and ICAM3 by binding to mannose-like carbohydrates. Interacts (via C-type lectin domain) with CEACAM1 (via Lewis X moieties); this interaction is regulated by the glycosylation pattern of CEACAM1 on cell types and regulates contact between dendritic cells and neutrophils.

It localises to the membrane. Functionally, pathogen-recognition receptor expressed on the surface of immature dendritic cells (DCs) and involved in initiation of primary immune response. Thought to mediate the endocytosis of pathogens which are subsequently degraded in lysosomal compartments. The receptor returns to the cell membrane surface and the pathogen-derived antigens are presented to resting T-cells via MHC class II proteins to initiate the adaptive immune response. Probably recognizes in a calcium-dependent manner high mannose N-linked oligosaccharides in a variety of pathogen antigens. On DCs it is a high affinity receptor for ICAM2 and ICAM3 by binding to mannose-like carbohydrates. May act as a DC rolling receptor that mediates transendothelial migration of DC presursors from blood to tissues by binding endothelial ICAM2. Seems to regulate DC-induced T-cell proliferation by binding to ICAM3 on T-cells in the immunological synapse formed between DC and T-cells. This Symphalangus syndactylus (Siamang) protein is CD209 antigen (CD209).